We begin with the raw amino-acid sequence, 443 residues long: Glutamyl-tRNA reductase (443 aa).

Residues 49-52 (TCNR), S109, 114-116 (ETQ), and Q120 contribute to the substrate site. The Nucleophile role is filled by C50. 189 to 194 (GAGKMG) is an NADP(+) binding site.

The protein belongs to the glutamyl-tRNA reductase family. As to quaternary structure, homodimer.

It carries out the reaction (S)-4-amino-5-oxopentanoate + tRNA(Glu) + NADP(+) = L-glutamyl-tRNA(Glu) + NADPH + H(+). It participates in porphyrin-containing compound metabolism; protoporphyrin-IX biosynthesis; 5-aminolevulinate from L-glutamyl-tRNA(Glu): step 1/2. Its function is as follows. Catalyzes the NADPH-dependent reduction of glutamyl-tRNA(Glu) to glutamate 1-semialdehyde (GSA). The sequence is that of Glutamyl-tRNA reductase from Bacillus mycoides (strain KBAB4) (Bacillus weihenstephanensis).